The chain runs to 229 residues: Uracil-DNA glycosylase (229 aa).

Aspartate 64 (proton acceptor) is an active-site residue.

Belongs to the uracil-DNA glycosylase (UDG) superfamily. UNG family.

The protein localises to the cytoplasm. The enzyme catalyses Hydrolyzes single-stranded DNA or mismatched double-stranded DNA and polynucleotides, releasing free uracil.. In terms of biological role, excises uracil residues from the DNA which can arise as a result of misincorporation of dUMP residues by DNA polymerase or due to deamination of cytosine. This is Uracil-DNA glycosylase from Escherichia coli O7:K1 (strain IAI39 / ExPEC).